A 586-amino-acid polypeptide reads, in one-letter code: Kelch-like protein 7 (586 aa).

The BTB domain maps to C44–S111. The BACK domain maps to C146 to Q248. 6 Kelch repeats span residues R294 to N336, V337 to G382, K383 to G430, L431 to D481, I483 to S528, and I530 to D575.

In terms of assembly, homodimer. Component of the BCR(KLHL7) E3 ubiquitin ligase complex, at least composed of CUL3 and KLHL7 and RBX1.

It is found in the nucleus. The protein resides in the cytoplasm. The protein operates within protein modification; protein ubiquitination. In terms of biological role, substrate-specific adapter of a BCR (BTB-CUL3-RBX1) E3 ubiquitin ligase complex. The BCR(KLHL7) complex acts by mediating ubiquitination and subsequent degradation of substrate proteins. Probably mediates 'Lys-48'-linked ubiquitination. In Rattus norvegicus (Rat), this protein is Kelch-like protein 7 (Klhl7).